The sequence spans 352 residues: Biotin synthase (352 aa).

Residues 44–262 enclose the Radical SAM core domain; sequence NRVQVSTLLS…LAVARIMMPK (219 aa). Positions 59, 63, and 66 each coordinate [4Fe-4S] cluster. [2Fe-2S] cluster contacts are provided by cysteine 103, cysteine 134, cysteine 194, and arginine 266.

It belongs to the radical SAM superfamily. Biotin synthase family. In terms of assembly, homodimer. It depends on [4Fe-4S] cluster as a cofactor. The cofactor is [2Fe-2S] cluster.

The enzyme catalyses (4R,5S)-dethiobiotin + (sulfur carrier)-SH + 2 reduced [2Fe-2S]-[ferredoxin] + 2 S-adenosyl-L-methionine = (sulfur carrier)-H + biotin + 2 5'-deoxyadenosine + 2 L-methionine + 2 oxidized [2Fe-2S]-[ferredoxin]. It functions in the pathway cofactor biosynthesis; biotin biosynthesis; biotin from 7,8-diaminononanoate: step 2/2. In terms of biological role, catalyzes the conversion of dethiobiotin (DTB) to biotin by the insertion of a sulfur atom into dethiobiotin via a radical-based mechanism. This chain is Biotin synthase, found in Pseudomonas aeruginosa (strain UCBPP-PA14).